The chain runs to 289 residues: Agamous-like MADS-box protein AGL93 (289 aa).

Positions 18–78 (QTCFKKSSLS…GKLIKTWPDD (61 aa)) constitute an MADS-box domain. Positions 151-197 (EFGQTRAVSSTTNPLSPPPSLIEDHRHQQRTEPLMSGVSNTEQDLST) are disordered. A compositionally biased stretch (polar residues) spans 187–197 (GVSNTEQDLST).

As to expression, expressed in pollen.

It localises to the nucleus. In terms of biological role, probable transcription factor. The sequence is that of Agamous-like MADS-box protein AGL93 from Arabidopsis thaliana (Mouse-ear cress).